Reading from the N-terminus, the 127-residue chain is Holo-[acyl-carrier-protein] synthase (127 aa).

Residues D7 and E56 each coordinate Mg(2+).

It belongs to the P-Pant transferase superfamily. AcpS family. Requires Mg(2+) as cofactor.

Its subcellular location is the cytoplasm. The catalysed reaction is apo-[ACP] + CoA = holo-[ACP] + adenosine 3',5'-bisphosphate + H(+). Functionally, transfers the 4'-phosphopantetheine moiety from coenzyme A to a Ser of acyl-carrier-protein. The protein is Holo-[acyl-carrier-protein] synthase of Onion yellows phytoplasma (strain OY-M).